Here is a 190-residue protein sequence, read N- to C-terminus: Probable GTP-binding protein EngB (190 aa).

Residues 22–190 (VKREVAFAGR…LNELLKILIP (169 aa)) enclose the EngB-type G domain. GTP is bound by residues 30–37 (GRSNVGKS), 56–60 (GKTRS), 74–77 (DLPG), 141–144 (TKTD), and 173–175 (FSA). Residues Ser37 and Thr58 each contribute to the Mg(2+) site.

Belongs to the TRAFAC class TrmE-Era-EngA-EngB-Septin-like GTPase superfamily. EngB GTPase family. It depends on Mg(2+) as a cofactor.

Its function is as follows. Necessary for normal cell division and for the maintenance of normal septation. This is Probable GTP-binding protein EngB from Kosmotoga olearia (strain ATCC BAA-1733 / DSM 21960 / TBF 19.5.1).